Reading from the N-terminus, the 451-residue chain is Probable D-serine dehydratase (451 aa).

The disordered stretch occupies residues 1–55 (MPGRTRPSCRLAITFTPRPDSATPRAGRAAPATGRRSNRSRSTLSATASPMPRRP). Low complexity predominate over residues 22–35 (ATPRAGRAAPATGR). Residue Lys-118 is modified to N6-(pyridoxal phosphate)lysine.

The protein belongs to the serine/threonine dehydratase family. DsdA subfamily. The cofactor is pyridoxal 5'-phosphate.

The enzyme catalyses D-serine = pyruvate + NH4(+). The polypeptide is Probable D-serine dehydratase (Paracidovorax citrulli (strain AAC00-1) (Acidovorax citrulli)).